We begin with the raw amino-acid sequence, 177 residues long: Ribosome maturation factor RimP (177 aa).

It belongs to the RimP family.

Its subcellular location is the cytoplasm. In terms of biological role, required for maturation of 30S ribosomal subunits. The protein is Ribosome maturation factor RimP of Methylibium petroleiphilum (strain ATCC BAA-1232 / LMG 22953 / PM1).